The following is a 391-amino-acid chain: Autotransporter heptosyltransferase Aah (391 aa).

3 residues coordinate ADP-D-glycero-beta-D-manno-heptose: Thr101, Leu102, and Gly103. Residue Asp104 is the Proton acceptor of the active site. The ADP-D-glycero-beta-D-manno-heptose site is built by Gln218, Thr220, Lys224, Arg251, Leu275, Gly296, and Glu320. Fe(3+) contacts are provided by Cys333, Cys336, Cys352, and Cys364.

Belongs to the glycosyltransferase 9 family. In terms of assembly, homododecamer composed of 6 homodimers forming a ring. It depends on Fe(3+) as a cofactor.

It localises to the cytoplasm. It carries out the reaction ADP-D-glycero-beta-D-manno-heptose + L-seryl-[protein] = O-(D-glycero-alpha-D-manno-heptosyl)-L-seryl-[protein] + ADP + H(+). The enzyme catalyses ADP-L-glycero-beta-D-manno-heptose + L-seryl-[protein] = O-(L-glycero-alpha-D-manno-heptosyl)-L-seryl-[protein] + ADP + H(+). Its function is as follows. Glycosylates autotransporter AIDA-I. Catalyzes the addition of both L, D-heptose and D, D-heptose sugars. Probably by glycosylating AIDA-I, involved in bacteria adhesion to host mammalian cells. The polypeptide is Autotransporter heptosyltransferase Aah (Escherichia coli).